We begin with the raw amino-acid sequence, 116 residues long: Small ribosomal subunit protein eS24 (116 aa).

The interval 81–116 (IEPEHMVERHKKVLEELESESEESEESESEESEEEE) is disordered. Residues 96–116 (ELESESEESEESESEESEEEE) are compositionally biased toward acidic residues.

The protein belongs to the eukaryotic ribosomal protein eS24 family.

The chain is Small ribosomal subunit protein eS24 from Methanopyrus kandleri (strain AV19 / DSM 6324 / JCM 9639 / NBRC 100938).